An 88-amino-acid polypeptide reads, in one-letter code: Class II hydrophobin 1 (88 aa).

An N-terminal signal peptide occupies residues 1–15; it reads MKFFIATIFATGALA. Intrachain disulfides connect C19–C69, C29–C59, C30–C42, and C70–C81.

This sequence belongs to the cerato-ulmin hydrophobin family. Homodimer. Homodimers further self-assemble to form highly ordered films at water-air interfaces through intermolecular interactions.

The protein localises to the secreted. It is found in the cell wall. In terms of biological role, aerial growth, conidiation, and dispersal of filamentous fungi in the environment rely upon a capability of their secreting small amphipathic proteins called hydrophobins (HPBs) with low sequence identity. Class I can self-assemble into an outermost layer of rodlet bundles on aerial cell surfaces, conferring cellular hydrophobicity that supports fungal growth, development and dispersal; whereas Class II form highly ordered films at water-air interfaces through intermolecular interactions but contribute nothing to the rodlet structure. This is Class II hydrophobin 1 from Trichoderma asperellum (strain ATCC 204424 / CBS 433.97 / NBRC 101777).